A 240-amino-acid polypeptide reads, in one-letter code: uncharacterized protein (240 aa).

Helical transmembrane passes span 16 to 36 and 67 to 87; these read AVFF…YFIP and FITA…VIAM.

The protein localises to the cell membrane. This is an uncharacterized protein from Bacillus subtilis (strain 168).